Here is a 122-residue protein sequence, read N- to C-terminus: Flagellar protein FliT (122 aa).

The segment at 1-50 is required for homodimerization; sequence MERQQQLLAAYQQIHSLSSQMIALAQTERWEDLVELELAYVTAVESTAAF. A fliD binding region spans residues 60–98; the sequence is LQELLRNKLQQILDNETELKRLLQQRMDQLKELIGQSTR.

Belongs to the FliT family. Homodimer. Interacts with FliD and FlhC.

The protein resides in the cytoplasm. It localises to the cytosol. Dual-function protein that regulates the transcription of class 2 flagellar operons and that also acts as an export chaperone for the filament-capping protein FliD. As a transcriptional regulator, acts as an anti-FlhDC factor; it directly binds FlhC, thus inhibiting the binding of the FlhC/FlhD complex to class 2 promoters, resulting in decreased expression of class 2 flagellar operons. As a chaperone, effects FliD transition to the membrane by preventing its premature polymerization, and by directing it to the export apparatus. In Serratia proteamaculans (strain 568), this protein is Flagellar protein FliT.